Consider the following 528-residue polypeptide: ATP synthase subunit beta 2 (528 aa).

Positions 1–10 (MADPQATNGT) are enriched in polar residues. Positions 1 to 27 (MADPQATNGTGAACAERDASDVGDARD) are disordered. The span at 15-27 (AERDASDVGDARD) shows a compositional bias: basic and acidic residues. 179–186 (GGAGVGKT) contributes to the ATP binding site. Over residues 488–499 (AAAREADARREA) the composition is skewed to basic and acidic residues. Residues 488–528 (AAAREADARREAAAAASGAGPGTTSDPASGSAEPQGARHGR) form a disordered region.

This sequence belongs to the ATPase alpha/beta chains family. As to quaternary structure, F-type ATPases have 2 components, CF(1) - the catalytic core - and CF(0) - the membrane proton channel. CF(1) has five subunits: alpha(3), beta(3), gamma(1), delta(1), epsilon(1). CF(0) has three main subunits: a(1), b(2) and c(9-12). The alpha and beta chains form an alternating ring which encloses part of the gamma chain. CF(1) is attached to CF(0) by a central stalk formed by the gamma and epsilon chains, while a peripheral stalk is formed by the delta and b chains.

The protein resides in the cell inner membrane. It carries out the reaction ATP + H2O + 4 H(+)(in) = ADP + phosphate + 5 H(+)(out). In terms of biological role, produces ATP from ADP in the presence of a proton gradient across the membrane. The catalytic sites are hosted primarily by the beta subunits. The polypeptide is ATP synthase subunit beta 2 (Burkholderia pseudomallei (strain 1106a)).